The sequence spans 237 residues: Ribosomal RNA small subunit methyltransferase G (237 aa).

Residues glycine 75, phenylalanine 80, 127 to 128 (AE), and arginine 146 contribute to the S-adenosyl-L-methionine site.

It belongs to the methyltransferase superfamily. RNA methyltransferase RsmG family.

It localises to the cytoplasm. In terms of biological role, specifically methylates the N7 position of a guanine in 16S rRNA. The sequence is that of Ribosomal RNA small subunit methyltransferase G from Synechococcus sp. (strain RCC307).